Consider the following 324-residue polypeptide: MADQVEEKKRIKTVKDLSGVGQAVLNKLTEAGYSTLESIAVASPQDLSTAAGIPITTAQRIIKEARDALDIRFKTALEIEQERASVKKITTGSQALDGLLGGGIETRTMTELFGEFGSGKTQICHQVSVNVQLPPERGGLSGKALYIDTEGTFRTERIKAMASALGLEPKEVLQNIMSIRAINTDHQIAIVEELQDIIAKDNSIKLVVVDSITSHFRAEYSGRENLAVRQQKLNRHLHQLVRLAEIYDLAVIVTNQVMARPDMFYGDPTVAVGGHTLYHVPGIRVQIKKSRGNRRIARMVDAPHLPEGEVVFSITNTGIRDAEE.

114 to 121 (GEFGSGKT) is an ATP binding site.

Belongs to the eukaryotic RecA-like protein family.

Functionally, involved in DNA repair and in homologous recombination. Binds and assemble on single-stranded DNA to form a nucleoprotein filament. Hydrolyzes ATP in a ssDNA-dependent manner and promotes DNA strand exchange between homologous DNA molecules. The protein is DNA repair and recombination protein RadA of Metallosphaera sedula (strain ATCC 51363 / DSM 5348 / JCM 9185 / NBRC 15509 / TH2).